Reading from the N-terminus, the 114-residue chain is uncharacterized protein (114 aa).

2 helical membrane-spanning segments follow: residues 9–29 and 75–95; these read LAIF…SFWL and LVHF…VAII.

It is found in the cell membrane. This is an uncharacterized protein from Mycoplasma pneumoniae (strain ATCC 29342 / M129 / Subtype 1) (Mycoplasmoides pneumoniae).